The sequence spans 122 residues: MARIAGIDLPRNKRIEIALTYIFGIGRTTAQRILAETGVSADTRTDNLAESEVAKIRDYIDKNLKVEGDLRRDVSMDIKRLMDLGCYRGLRHRKGLPVRGQRTKTNARTRKGPARTVAGKKK.

Residues 97–122 (PVRGQRTKTNARTRKGPARTVAGKKK) are disordered.

Belongs to the universal ribosomal protein uS13 family. As to quaternary structure, part of the 30S ribosomal subunit. Forms a loose heterodimer with protein S19. Forms two bridges to the 50S subunit in the 70S ribosome.

In terms of biological role, located at the top of the head of the 30S subunit, it contacts several helices of the 16S rRNA. In the 70S ribosome it contacts the 23S rRNA (bridge B1a) and protein L5 of the 50S subunit (bridge B1b), connecting the 2 subunits; these bridges are implicated in subunit movement. Contacts the tRNAs in the A and P-sites. This Geobacter sulfurreducens (strain ATCC 51573 / DSM 12127 / PCA) protein is Small ribosomal subunit protein uS13.